A 109-amino-acid polypeptide reads, in one-letter code: Cell division protein FtsL (109 aa).

The Cytoplasmic segment spans residues 1 to 3 (MSR). Residues 4–21 (LNIFLLIIVMGCALSVVN) form a helical membrane-spanning segment. Residues 22–109 (STNQQRQIFI…ASAAPTGGAR (88 aa)) lie on the Periplasmic side of the membrane.

The protein belongs to the FtsL family. Part of a complex composed of FtsB, FtsL and FtsQ.

Its subcellular location is the cell inner membrane. In terms of biological role, essential cell division protein. May link together the upstream cell division proteins, which are predominantly cytoplasmic, with the downstream cell division proteins, which are predominantly periplasmic. The protein is Cell division protein FtsL of Burkholderia pseudomallei (strain K96243).